A 115-amino-acid chain; its full sequence is MPMFIVNTNVPRASVPEGFLSELTQQLAQATGKPAQYIAVHVVPDQLMTFSGTNDPCALCSLHSIGKIGGAQNRNYSKLLCGLLSDRLHISPDRVYINYYDMNAANVGWNGSTFA.

Pro2 functions as the Proton acceptor; via imino nitrogen in the catalytic mechanism. Positions 33 and 65 each coordinate substrate. The residue at position 78 (Lys78) is an N6-acetyllysine; alternate. At Lys78 the chain carries N6-succinyllysine; alternate. Asn98 is a binding site for substrate.

The protein belongs to the MIF family. Homotrimer. Interacts with CD74 and CXCR2 extracellular domain and COPS5. Interacts with the USO1 and BNIPL.

The protein localises to the secreted. It is found in the cytoplasm. It carries out the reaction 3-phenylpyruvate = enol-phenylpyruvate. The enzyme catalyses L-dopachrome = 5,6-dihydroxyindole-2-carboxylate. In terms of biological role, pro-inflammatory cytokine involved in the innate immune response to bacterial pathogens. The expression of MIF at sites of inflammation suggests a role as mediator in regulating the function of macrophages in host defense. Counteracts the anti-inflammatory activity of glucocorticoids. Has phenylpyruvate tautomerase and dopachrome tautomerase activity (in vitro), but the physiological substrate is not known. It is not clear whether the tautomerase activity has any physiological relevance, and whether it is important for cytokine activity. This chain is Macrophage migration inhibitory factor, found in Mus musculus (Mouse).